The sequence spans 655 residues: tRNA 5-methylaminomethyl-2-thiouridine biosynthesis bifunctional protein MnmC (655 aa).

The segment at M1–A236 is tRNA (mnm(5)s(2)U34)-methyltransferase. An FAD-dependent cmnm(5)s(2)U34 oxidoreductase region spans residues I260 to S655.

It in the N-terminal section; belongs to the methyltransferase superfamily. tRNA (mnm(5)s(2)U34)-methyltransferase family. The protein in the C-terminal section; belongs to the DAO family. FAD serves as cofactor.

The protein resides in the cytoplasm. The catalysed reaction is 5-aminomethyl-2-thiouridine(34) in tRNA + S-adenosyl-L-methionine = 5-methylaminomethyl-2-thiouridine(34) in tRNA + S-adenosyl-L-homocysteine + H(+). Catalyzes the last two steps in the biosynthesis of 5-methylaminomethyl-2-thiouridine (mnm(5)s(2)U) at the wobble position (U34) in tRNA. Catalyzes the FAD-dependent demodification of cmnm(5)s(2)U34 to nm(5)s(2)U34, followed by the transfer of a methyl group from S-adenosyl-L-methionine to nm(5)s(2)U34, to form mnm(5)s(2)U34. The protein is tRNA 5-methylaminomethyl-2-thiouridine biosynthesis bifunctional protein MnmC of Paraburkholderia phymatum (strain DSM 17167 / CIP 108236 / LMG 21445 / STM815) (Burkholderia phymatum).